Reading from the N-terminus, the 131-residue chain is Histone H2A.2 (131 aa).

The tract at residues 1–22 (MSGGKGKAGSSEKASTSRSAKA) is disordered. S2 bears the N-acetylserine mark. An N6-acetyllysine mark is found at K5 and K7. Q105 bears the N5-methylglutamine mark. Phosphoserine is present on S128. A [ST]-Q motif motif is present at residues 128–129 (SQ).

This sequence belongs to the histone H2A family. As to quaternary structure, the nucleosome is a histone octamer containing two molecules each of H2A, H2B, H3 and H4 assembled in one H3-H4 heterotetramer and two H2A-H2B heterodimers. The octamer wraps approximately 147 bp of DNA. In terms of processing, phosphorylated to form H2AS128ph (gamma-H2A) in response to DNA double-strand breaks (DSBs) generated by exogenous genotoxic agents and by stalled replication forks. Phosphorylation is dependent on the DNA damage checkpoint kinases MEC1/ATR and TEL1/ATM, spreads on either side of a detected DSB site and may mark the surrounding chromatin for recruitment of proteins required for DNA damage signaling and repair. Gamma-H2A is removed from the DNA prior to the strand invasion-primer extension step of the repair process and subsequently dephosphorylated. Dephosphorylation is necessary for efficient recovery from the DNA damage checkpoint. Acetylated by ESA1 to form H2AK4ac and H2AK7ac.

The protein resides in the nucleus. It localises to the chromosome. In terms of biological role, core component of nucleosome which plays a central role in DNA double strand break (DSB) repair. Nucleosomes wrap and compact DNA into chromatin, limiting DNA accessibility to the cellular machineries which require DNA as a template. Histones thereby play a central role in transcription regulation, DNA repair, DNA replication and chromosomal stability. DNA accessibility is regulated via a complex set of post-translational modifications of histones, also called histone code, and nucleosome remodeling. The protein is Histone H2A.2 (HTA2) of Debaryomyces hansenii (strain ATCC 36239 / CBS 767 / BCRC 21394 / JCM 1990 / NBRC 0083 / IGC 2968) (Yeast).